The sequence spans 78 residues: Acyl carrier protein 1 (78 aa).

The region spanning 2-77 (STIEERVKKI…EAIDYIVAHQ (76 aa)) is the Carrier domain. Ser-37 bears the O-(pantetheine 4'-phosphoryl)serine mark.

It belongs to the acyl carrier protein (ACP) family. Post-translationally, 4'-phosphopantetheine is transferred from CoA to a specific serine of apo-ACP by AcpS. This modification is essential for activity because fatty acids are bound in thioester linkage to the sulfhydryl of the prosthetic group.

The protein resides in the cytoplasm. It participates in lipid metabolism; fatty acid biosynthesis. Functionally, carrier of the growing fatty acid chain in fatty acid biosynthesis. The protein is Acyl carrier protein 1 of Pseudomonas aeruginosa (strain ATCC 15692 / DSM 22644 / CIP 104116 / JCM 14847 / LMG 12228 / 1C / PRS 101 / PAO1).